Consider the following 216-residue polypeptide: Large ribosomal subunit protein uL3 (216 aa).

Gln-153 is subject to N5-methylglutamine.

Belongs to the universal ribosomal protein uL3 family. In terms of assembly, part of the 50S ribosomal subunit. Forms a cluster with proteins L14 and L19. Post-translationally, methylated by PrmB.

Its function is as follows. One of the primary rRNA binding proteins, it binds directly near the 3'-end of the 23S rRNA, where it nucleates assembly of the 50S subunit. The chain is Large ribosomal subunit protein uL3 from Burkholderia multivorans (strain ATCC 17616 / 249).